Consider the following 771-residue polypeptide: Glucocorticoid receptor (771 aa).

The tract at residues 1 to 415 is modulating; it reads MDLKESVTSS…STTTGPPPKL (415 aa). Position 8 is a phosphothreonine (Thr8). Arg22 carries the omega-N-methylarginine modification. 5 positions are modified to phosphoserine: Ser44, Ser133, Ser199, Ser207, and Ser222. The span at 129 to 172 shows a compositional bias: polar residues; it reads SRSTSVPENPKNSASAVSGTPTEEFPKTQSDLSSEQENLKSQAG. Positions 129–184 are disordered; that stretch reads SRSTSVPENPKNSASAVSGTPTEEFPKTQSDLSSEQENLKSQAGTNGGNVKFPPDQ. Lys254 is covalently cross-linked (Glycyl lysine isopeptide (Lys-Gly) (interchain with G-Cter in SUMO2)). Ser263 is subject to Phosphoserine. Glycyl lysine isopeptide (Lys-Gly) (interchain with G-Cter in SUMO); alternate cross-links involve residues Lys273 and Lys289. Residues Lys273 and Lys289 each participate in a glycyl lysine isopeptide (Lys-Gly) (interchain with G-Cter in SUMO2); alternate cross-link. Residues Ser303 and Ser400 each carry the phosphoserine modification. Positions 390–411 are disordered; it reads SSPGLRPDVSSPPSSSSTTTGP. Positions 400–409 are enriched in low complexity; the sequence is SPPSSSSTTT. Lys414 is covalently cross-linked (Glycyl lysine isopeptide (Lys-Gly) (interchain with G-Cter in ubiquitin)). NR C4-type zinc fingers lie at residues 416 to 436 and 452 to 476; these read CLVCSDELSGCHYGVLTCGSC and CAGRNDCIIDKIRRENCPACRYRKC. Positions 416–481 form a DNA-binding region, nuclear receptor; sequence CLVCSDELSG…RYRKCLQAGM (66 aa). Residues Lys475, Lys487, Lys489, and Lys490 each carry the N6-acetyllysine modification. The interval 480-771 is interaction with CLOCK; sequence GMNLQARKTK…DIKKLLFHQK (292 aa). The segment at 482–517 is hinge; sequence NLQARKTKKKIKGIQQATTGVSQNTSENPNKTIVPA. Positions 518-752 constitute an NR LBD domain; that stretch reads TLPQLTPTLV…FPEMLAEIIT (235 aa). The tract at residues 526–691 is interaction with CRY1; the sequence is LVSLLEVIEP…EIRMTYIKEL (166 aa). A Glycyl lysine isopeptide (Lys-Gly) (interchain with G-Cter in SUMO) cross-link involves residue Lys697.

The protein belongs to the nuclear hormone receptor family. NR3 subfamily. In terms of assembly, heteromultimeric cytoplasmic complex with HSP90AA1, HSPA1A/HSPA1B, and FKBP5 or another immunophilin such as PPID, STIP1, or the immunophilin homolog PPP5C. Upon ligand binding FKBP5 dissociates from the complex and FKBP4 takes its place, thereby linking the complex to dynein and mediating transport to the nucleus, where the complex dissociates. Probably forms a complex composed of chaperones HSP90 and HSP70, co-chaperones CDC37, PPP5C, TSC1 and client protein TSC2, CDK4, AKT, RAF1 and NR3C1; this complex does not contain co-chaperones STIP1/HOP and PTGES3/p23. Directly interacts with UNC45A. Binds to DNA as a homodimer, and as heterodimer with NR3C2 or the retinoid X receptor. Binds STAT5A and STAT5B homodimers and heterodimers. Interacts with NRIP1, POU2F1, POU2F2 and TRIM28. Interacts with several coactivator complexes, including the SMARCA4 complex, CREBBP/EP300, TADA2L (Ada complex) and p160 coactivators such as NCOA2 and NCOA6. Interaction with BAG1 inhibits transactivation. Interacts with HEXIM1 and TGFB1I1. Interacts with NCOA1. Interacts with NCOA3, SMARCA4, SMARCC1, SMARCD1, and SMARCE1. Interacts with CLOCK, CRY1 and CRY2 in a ligand-dependent fashion. Interacts with CIART. Interacts with RWDD3. Interacts with UBE2I/UBC9 and this interaction is enhanced in the presence of RWDD3. Interacts with GRIP1. Interacts with NR4A3 (via nuclear receptor DNA-binding domain), represses transcription activity of NR4A3 on the POMC promoter Nur response element (NurRE). Directly interacts with PNRC2 to attract and form a complex with UPF1 and DCP1A; the interaction leads to rapid mRNA degradation. Interacts with GSK3B. Interacts with FNIP1 and FNIP2. Interacts (via C-terminus) with HNRNPU (via C-terminus). Interacts with MCM3AP. Interacts (via domain NR LBD) with HSP90AA1 and HSP90AB1. In the absence of hormonal ligand, interacts with TACC1. Interacts (via NR LBD domain) with ZNF764 (via KRAB domain); the interaction regulates transcription factor activity of NR3C1 by directing its actions toward certain biologic pathways. Post-translationally, acetylation by CLOCK reduces its binding to glucocorticoid response elements and its transcriptional activity. In terms of processing, increased proteasome-mediated degradation in response to glucocorticoids. Phosphorylated in the absence of hormone; becomes hyperphosphorylated in the presence of glucocorticoid. The Ser-199, Ser-222 and Ser-400-phosphorylated forms are mainly cytoplasmic, and the Ser-207-phosphorylated form is nuclear. Phosphorylation at Ser-207 increases transcriptional activity. Phosphorylation at Ser-199, Ser-222 and Ser-400 decreases signaling capacity. Phosphorylation at Ser-400 may protect from glucocorticoid-induced apoptosis. Phosphorylation at Ser-199 and Ser-207 is not required in regulation of chromosome segregation. May be dephosphorylated by PPP5C, attenuates NR3C1 action. Post-translationally, ubiquitinated by UBR5, leading to its degradation: UBR5 specifically recognizes and binds ligand-bound NR3C1 when it is not associated with coactivators (NCOAs). In presence of NCOAs, the UBR5-degron is not accessible, preventing its ubiquitination and degradation. In terms of processing, sumoylation at Lys-273 and Lys-289 negatively regulates its transcriptional activity. Sumoylation at Lys-697 positively regulates its transcriptional activity in the presence of RWDD3. Sumoylation at Lys-273 and Lys-289 is dispensable whereas sumoylation at Lys-697 is critical for the stimulatory effect of RWDD3 on its transcriptional activity. Heat shock increases sumoylation in a RWDD3-dependent manner.

It localises to the cytoplasm. Its subcellular location is the nucleus. The protein resides in the mitochondrion. The protein localises to the cytoskeleton. It is found in the spindle. It localises to the microtubule organizing center. Its subcellular location is the centrosome. The protein resides in the chromosome. The protein localises to the nucleoplasm. Functionally, receptor for glucocorticoids (GC). Has a dual mode of action: as a transcription factor that binds to glucocorticoid response elements (GRE), both for nuclear and mitochondrial DNA, and as a modulator of other transcription factors. Affects inflammatory responses, cellular proliferation and differentiation in target tissues. Involved in chromatin remodeling. Plays a role in rapid mRNA degradation by binding to the 5' UTR of target mRNAs and interacting with PNRC2 in a ligand-dependent manner which recruits the RNA helicase UPF1 and the mRNA-decapping enzyme DCP1A, leading to RNA decay. Could act as a coactivator for STAT5-dependent transcription upon growth hormone (GH) stimulation and could reveal an essential role of hepatic GR in the control of body growth. Mediates glucocorticoid-induced apoptosis. Promotes accurate chromosome segregation during mitosis. May act as a tumor suppressor. May play a negative role in adipogenesis through the regulation of lipolytic and antilipogenic gene expression. The polypeptide is Glucocorticoid receptor (NR3C1) (Cavia porcellus (Guinea pig)).